Consider the following 405-residue polypeptide: 4-hydroxy-3-methylbut-2-en-1-yl diphosphate synthase (ferredoxin) (405 aa).

[4Fe-4S] cluster contacts are provided by Cys-314, Cys-317, Cys-348, and Glu-355.

The protein belongs to the IspG family. [4Fe-4S] cluster is required as a cofactor.

It carries out the reaction (2E)-4-hydroxy-3-methylbut-2-enyl diphosphate + 2 oxidized [2Fe-2S]-[ferredoxin] + H2O = 2-C-methyl-D-erythritol 2,4-cyclic diphosphate + 2 reduced [2Fe-2S]-[ferredoxin] + H(+). Its pathway is isoprenoid biosynthesis; isopentenyl diphosphate biosynthesis via DXP pathway; isopentenyl diphosphate from 1-deoxy-D-xylulose 5-phosphate: step 5/6. In terms of biological role, converts 2C-methyl-D-erythritol 2,4-cyclodiphosphate (ME-2,4cPP) into 1-hydroxy-2-methyl-2-(E)-butenyl 4-diphosphate. This chain is 4-hydroxy-3-methylbut-2-en-1-yl diphosphate synthase (ferredoxin), found in Prochlorococcus marinus subsp. pastoris (strain CCMP1986 / NIES-2087 / MED4).